A 459-amino-acid chain; its full sequence is Xylose/arabinose-binding protein XacG (459 aa).

A helical membrane pass occupies residues 19 to 36; sequence ALTVGAAAGIAGCTGGGG. Residues 27–68 are disordered; the sequence is GIAGCTGGGGTETESTESGNGNGSGGSTDDTETSGSSSGESW.

It belongs to the bacterial solute-binding protein 1 family. As to quaternary structure, the complex is composed of two ATP-binding proteins (XacJ and XacK), two transmembrane proteins (XacH and XacI) and a solute-binding protein (XacG).

It localises to the cell membrane. Functionally, part of the ABC transporter complex XacGHIJK involved in the uptake of xylose and arabinose. In Haloferax volcanii (strain ATCC 29605 / DSM 3757 / JCM 8879 / NBRC 14742 / NCIMB 2012 / VKM B-1768 / DS2) (Halobacterium volcanii), this protein is Xylose/arabinose-binding protein XacG.